The primary structure comprises 259 residues: MDPAQKRAAFNALAVAARDQHSPSDAKRIAKRDQMLGYVRGPWEQLEDDDSTRYDTLKQAMDDAMSKILSQAQVVHRTKHLDKLLDSGRISSLFEVGFSAGGDTPGQRALYEEAWFGKGHVPPVYSALEFDGVKPKGMSMYGSTKLYLKPEVRDRVTVTIGDSLMSSDSVFPGKPGDGLGLRANPNAIKNLVDPNKSREENMQAIYESFKKYAESNFIESQIHDGVILEDIEKVVFTQPPSSFLTDKLDKLGIPWEVES.

The protein is Gene 2 protein (2) of Mycobacterium (Mycobacteriophage D29).